A 476-amino-acid chain; its full sequence is Ribulose bisphosphate carboxylase large chain (476 aa).

Residues 1–2 (MS) constitute a propeptide that is removed on maturation. Pro-3 bears the N-acetylproline mark. The residue at position 14 (Lys-14) is an N6,N6,N6-trimethyllysine. Residues Asn-123 and Thr-173 each coordinate substrate. Lys-175 acts as the Proton acceptor in catalysis. Lys-177 serves as a coordination point for substrate. Mg(2+) contacts are provided by Lys-201, Asp-203, and Glu-204. The residue at position 201 (Lys-201) is an N6-carboxylysine. Catalysis depends on His-294, which acts as the Proton acceptor. The substrate site is built by Arg-295, His-327, and Ser-379.

It belongs to the RuBisCO large chain family. Type I subfamily. In terms of assembly, heterohexadecamer of 8 large chains and 8 small chains; disulfide-linked. The disulfide link is formed within the large subunit homodimers. Mg(2+) serves as cofactor. Post-translationally, the disulfide bond which can form in the large chain dimeric partners within the hexadecamer appears to be associated with oxidative stress and protein turnover.

The protein localises to the plastid. It is found in the chloroplast. It carries out the reaction 2 (2R)-3-phosphoglycerate + 2 H(+) = D-ribulose 1,5-bisphosphate + CO2 + H2O. The catalysed reaction is D-ribulose 1,5-bisphosphate + O2 = 2-phosphoglycolate + (2R)-3-phosphoglycerate + 2 H(+). RuBisCO catalyzes two reactions: the carboxylation of D-ribulose 1,5-bisphosphate, the primary event in carbon dioxide fixation, as well as the oxidative fragmentation of the pentose substrate in the photorespiration process. Both reactions occur simultaneously and in competition at the same active site. This chain is Ribulose bisphosphate carboxylase large chain, found in Arenaria drummondii (Drummond sandwort).